Consider the following 129-residue polypeptide: NADH-quinone oxidoreductase subunit A (129 aa).

The next 3 helical transmembrane spans lie at 14 to 34, 67 to 87, and 97 to 117; these read LAIH…VAAV, FLIA…FAWA, and GLIE…YLWI.

Belongs to the complex I subunit 3 family. As to quaternary structure, NDH-1 is composed of 14 different subunits. Subunits NuoA, H, J, K, L, M, N constitute the membrane sector of the complex.

It localises to the cell inner membrane. It carries out the reaction a quinone + NADH + 5 H(+)(in) = a quinol + NAD(+) + 4 H(+)(out). Functionally, NDH-1 shuttles electrons from NADH, via FMN and iron-sulfur (Fe-S) centers, to quinones in the respiratory chain. The immediate electron acceptor for the enzyme in this species is believed to be ubiquinone. Couples the redox reaction to proton translocation (for every two electrons transferred, four hydrogen ions are translocated across the cytoplasmic membrane), and thus conserves the redox energy in a proton gradient. The protein is NADH-quinone oxidoreductase subunit A of Rhodopseudomonas palustris (strain BisB18).